Reading from the N-terminus, the 70-residue chain is MDILKKSLFLILFLGVVSLSICEEEKRENEEEMEQDDEQSEMKRALWKEVLKNAGKAALNEINNLVQGGQ.

A signal peptide spans 1-22 (MDILKKSLFLILFLGVVSLSIC). The propeptide occupies 23–44 (EEEKRENEEEMEQDDEQSEMKR). The residue at position 67 (Gln-67) is a Glutamine amide. Residues 68-70 (GGQ) constitute a propeptide that is removed on maturation.

Belongs to the frog skin active peptide (FSAP) family. Expressed by the skin glands.

The protein localises to the secreted. It is found in the target cell membrane. Antimicrobial peptide which inhibits the growth of Gram-negative (MIC=16-64 uM) and Gram-positive bacteria (MIC=32 uM), and pathogenic yeast Candida albicans (MIC=16 uM). Shows a broad-spectrum of anticancer activities against several cancer cell lines. Also shows slight cytotoxicity on human dermal microvascular endothelium cells (IC(50)=4.85 uM). Induces low hemolysis against horse erythrocytes. This chain is Dermaseptin-PH, found in Pithecopus hypochondrialis (Orange-legged leaf frog).